The following is a 194-amino-acid chain: Outer surface 22 kDa lipoprotein (194 aa).

Positions 1–21 (MYKNGFFKNYLSLFLIFLVIA) are cleaved as a signal peptide. Cysteine 22 carries the N-palmitoyl cysteine lipid modification. Cysteine 22 carries the S-diacylglycerol cysteine lipid modification.

It localises to the cell outer membrane. The protein is Outer surface 22 kDa lipoprotein (p22) of Borreliella burgdorferi (strain ZS7) (Borrelia burgdorferi).